The sequence spans 268 residues: Cytolethal distending toxin subunit A (268 aa).

Positions 1–19 are cleaved as a signal peptide; sequence MQKIIVFILCCFMTFFLYA. Cys20 carries N-palmitoyl cysteine lipidation. A lipid anchor (S-diacylglycerol cysteine) is attached at Cys20. Residues 112-252 enclose the Ricin B-type lectin domain; the sequence is VSDFLTILGP…DNFDQQWFLT (141 aa). A mediates binding to target cells region spans residues 129 to 140; that stretch reads WALAQGNWIWGY.

Heterotrimer of 3 subunits, CdtA, CdtB and CdtC.

It localises to the cell outer membrane. CDTs are cytotoxins which induce cell distension, growth arrest in G2/M phase, nucleus swelling, and chromatin fragmentation in HeLa cells. In Campylobacter jejuni subsp. jejuni serotype O:2 (strain ATCC 700819 / NCTC 11168), this protein is Cytolethal distending toxin subunit A (cdtA).